Here is a 493-residue protein sequence, read N- to C-terminus: FAD-linked oxidoreductase tazL (493 aa).

Residues 1-17 form the signal peptide; sequence MRSNTVILAALPLVASA. Residues N29, N41, N53, N91, N253, N318, and N387 are each glycosylated (N-linked (GlcNAc...) asparagine). Residues 63–235 enclose the FAD-binding PCMH-type domain; the sequence is WAEPTFAVTI…TSATYEIFDA (173 aa).

It belongs to the oxygen-dependent FAD-linked oxidoreductase family.

Its pathway is secondary metabolite biosynthesis. Functionally, FAD-linked oxidoreductase; part of the gene cluster that mediates the biosynthesis of azaterrilone A and other azaphilones, a class of fungal metabolites characterized by a highly oxygenated pyrano-quinone bicyclic core and exhibiting a broad range of bioactivities. The first step of the pathway begins with the non-reducing polyketide synthase tazA that assembles one acetyl-CoA starter unit, five malonyl-CoA units, and catalyzes a series of Claisen condensations, methylation, PT-mediated cyclization, and finally releases the first hexaketide precursor through the R-domain. The tazA product then undergoes reduction on its terminal ketone and the following pyran-ring formation by yet undetermined enzyme(s). Dehydration and enoyl reduction, possibly involving the trans-enoyl reductase tazE leads to the next intermediate. TazD is predicted as an acetyltransferase and might catalyze the acetylation steps leading to the synthesis of azaterrilone A. Azaterrilone A is not the final product of the taz pathway and both the highly reducing polyketide synthase tazB and the dual enzyme tazHJ catalyze late steps of the pathway, leading to the production of the 2 final stereoisomers that contain additional polyketide modification whose structures have still to be determined. This chain is FAD-linked oxidoreductase tazL, found in Aspergillus terreus (strain NIH 2624 / FGSC A1156).